A 299-amino-acid chain; its full sequence is GTP cyclohydrolase FolE2 (299 aa).

Residues 1-25 (MKTKQWPSKTERHKRFGSVPPVAGK) are disordered.

It belongs to the GTP cyclohydrolase IV family.

It catalyses the reaction GTP + H2O = 7,8-dihydroneopterin 3'-triphosphate + formate + H(+). It participates in cofactor biosynthesis; 7,8-dihydroneopterin triphosphate biosynthesis; 7,8-dihydroneopterin triphosphate from GTP: step 1/1. Converts GTP to 7,8-dihydroneopterin triphosphate. This chain is GTP cyclohydrolase FolE2, found in Halalkalibacterium halodurans (strain ATCC BAA-125 / DSM 18197 / FERM 7344 / JCM 9153 / C-125) (Bacillus halodurans).